A 354-amino-acid chain; its full sequence is ORC1-type DNA replication protein 9 (354 aa).

ATP is bound by residues Thr-63–Cys-67, Tyr-195, and Arg-207.

It belongs to the CDC6/cdc18 family.

Involved in regulation of DNA replication. The chain is ORC1-type DNA replication protein 9 (orc9-1) from Halobacterium salinarum (strain ATCC 700922 / JCM 11081 / NRC-1) (Halobacterium halobium).